Reading from the N-terminus, the 465-residue chain is UDP-N-acetylmuramoylalanine--D-glutamate ligase (465 aa).

ATP is bound at residue 112 to 118 (GTDGKTT).

Belongs to the MurCDEF family.

It is found in the cytoplasm. The enzyme catalyses UDP-N-acetyl-alpha-D-muramoyl-L-alanine + D-glutamate + ATP = UDP-N-acetyl-alpha-D-muramoyl-L-alanyl-D-glutamate + ADP + phosphate + H(+). It participates in cell wall biogenesis; peptidoglycan biosynthesis. In terms of biological role, cell wall formation. Catalyzes the addition of glutamate to the nucleotide precursor UDP-N-acetylmuramoyl-L-alanine (UMA). This chain is UDP-N-acetylmuramoylalanine--D-glutamate ligase, found in Chlorobium limicola (strain DSM 245 / NBRC 103803 / 6330).